The following is a 306-amino-acid chain: Protein FdhE homolog (306 aa).

It belongs to the FdhE family.

The protein localises to the cytoplasm. In terms of biological role, necessary for formate dehydrogenase activity. The protein is Protein FdhE homolog of Proteus mirabilis (strain HI4320).